The primary structure comprises 35 residues: U1-segestritoxin-Sf1a (35 aa).

2 cysteine pairs are disulfide-bonded: Cys-10-Cys-22 and Cys-17-Cys-28. The keys region for toxin activity stretch occupies residues 31–33; it reads DPW.

It belongs to the neurotoxin 16 (SFI) family. As to expression, expressed by the venom gland.

The protein localises to the secreted. In terms of biological role, insecticidal toxin. The polypeptide is U1-segestritoxin-Sf1a (Segestria florentina (Tube-web spider)).